The chain runs to 575 residues: 4-substituted benzoates-glutamate ligase GH3.12 (575 aa).

Residues 6–33 adopt a coiled-coil conformation; that stretch reads DINETFEKQLKDLTSNVKSIQDNLLEEI. 95–96 serves as a coordination point for AMP; it reads SS. 120 to 123 is a binding site for salicylate; sequence YDLR. The AMP site is built by Thr301, Thr324, Ser328, Tyr347, Asp398, and Arg417.

Belongs to the IAA-amido conjugating enzyme family. In terms of assembly, interacts with the P.syringae pv. maculicola effector HopW1-1 (via C-terminus). Expressed in seedlings, mostly in cotyledons, leaves, hypocotyls and sporadically in roots. Not detected in unchallenged adult plants, except in flowers.

Specifically and reversibly inhibited by salicylic acid (SA). Its function is as follows. Catalyzes the conjugation of specific amino acids (e.g. Glu and possibly His, Lys, and Met) to their preferred acyl substrates (e.g. 4-substituted benzoates), in a magnesium ion- and ATP-dependent manner. Can use 4-substituted benzoates such as 4-aminobenzoate (pABA), 4-fluorobenzoate and 4-hydroxybenzoate (4-HBA), and, to a lesser extent, benzoate, vanillate and trans-cinnamate, but not 2-substituted benzoates and salicylic acid (SA), as conjugating acyl substrates. Involved in both basal and induced resistance in a SA-dependent manner. Confers resistance to virulent and avirulent pathogens (at least bacteria and oomycetes), and promotes SA glucosides accumulation. Required for the establishment of hyper-sensitive response (HR) upon incompatible interaction and subsequent systemic acquired resistance (SAR). This chain is 4-substituted benzoates-glutamate ligase GH3.12 (GH3.12), found in Arabidopsis thaliana (Mouse-ear cress).